A 1804-amino-acid polypeptide reads, in one-letter code: Collagen alpha-1(XI) chain (1804 aa).

Positions 1-34 are cleaved as a signal peptide; it reads MEPWSRWKTKRWIWDLTISTLVLTFLFQAREVRG. The propeptide at 35–511 is N-terminal propeptide; it reads AAPVDILKAL…SKGPTISAQE (477 aa). Disulfide bonds link cysteine 60-cysteine 242 and cysteine 181-cysteine 235. The region spanning 70–242 is the Laminin G-like domain; sequence DIAYRVTEEA…DYCDHYSPDC (173 aa). Residues 229–417 form a nonhelical region region; the sequence is KAAYDYCDHY…DFTETSINGH (189 aa). A glycan (N-linked (GlcNAc...) asparagine) is linked at asparagine 351. Residues 418–506 form a triple-helical region (interrupted) region; that stretch reads GAYGEKGQKG…YGGDGSKGPT (89 aa). A disordered region spans residues 437-506; it reads LVEGPPGPAG…YGGDGSKGPT (70 aa). The Collagen-like 1 domain occupies 440–488; that stretch reads GPPGPAGPAGLMGPPGLQGPSGLPGDPGDRGPPGRPGLPGADGLPGPPG. 2 stretches are compositionally biased toward low complexity: residues 447 to 465 and 477 to 494; these read PAGL…LPGD and LPGA…LMLP. The short nonhelical segment stretch occupies residues 507-509; the sequence is ISA. Residues 510-527 form a telopeptide region; sequence QEAQAQAILQQARIALRG. Positions 526-1560 are disordered; it reads RGPPGPMGLT…KTRRHTESIQ (1035 aa). The tract at residues 528–1540 is triple-helical region; the sequence is PPGPMGLTGR…PGPPGPPGEV (1013 aa). 4 consecutive Collagen-like domains span residues 530–584, 581–639, 607–664, and 641–698; these read GPMG…GADG, GADG…EIGP, PGDK…PGQP, and GLPG…GPQG. Gly residues-rich tracts occupy residues 539 to 548 and 581 to 590; these read GPVGGPGSAG and GADGGRGMPG. Lysine 610 is subject to Allysine. A compositionally biased stretch (low complexity) spans 639 to 655; sequence PRGLPGEAGPRGLLGPR. Over residues 697–708 the composition is skewed to pro residues; sequence QGLPGPQGPIGP. Over residues 715–726 the composition is skewed to low complexity; the sequence is QGKPGLAGLPGA. A Collagen-like 6 domain is found at 746–804; the sequence is GPPGPQGPIGYPGPRGVKGADGVRGLKGSKGEKGEDGFPGFKGDMGLKGDRGEVGQVGP. Over residues 805–814 the composition is skewed to basic and acidic residues; that stretch reads RGEDGPEGPK. 3 stretches are compositionally biased toward low complexity: residues 873–901, 916–925, and 969–979; these read KPGP…PGPK, RGPQGPQGPV, and PQGPTGETGPI. Residues 1040 to 1049 show a composition bias toward gly residues; that stretch reads GLKGGEGPQG. The span at 1074–1083 shows a compositional bias: pro residues; it reads RPGPQGPPGP. Over residues 1084 to 1108 the composition is skewed to low complexity; the sequence is AGEKGAPGEKGPQGPAGRDGVQGPV. Over residues 1160 to 1169 the composition is skewed to gly residues; it reads GIAGGDGEAG. 2 stretches are compositionally biased toward pro residues: residues 1216-1227 and 1341-1360; these read MGPPGPPGPRGP and QPGP…PGKR. Low complexity-rich tracts occupy residues 1383 to 1392 and 1417 to 1426; these read AEGPPGKTGP and QGLPGAAGQD. Collagen-like domains follow at residues 1391–1449, 1442–1492, and 1481–1539; these read GPVG…SKGE, GDPG…PGPA, and GAKG…PPGE. Residues 1428-1437 are compositionally biased toward pro residues; sequence PPGPLGPPGL. Position 1450 is an allysine (lysine 1450). A compositionally biased stretch (low complexity) spans 1453–1462; it reads PGLIGLIGPP. A compositionally biased stretch (gly residues) spans 1481–1490; it reads GAKGDGGIPG. Pro residues predominate over residues 1491–1507; that stretch reads PAGPIGPPGPPGLPGPA. The segment covering 1509-1519 has biased composition (low complexity); it reads PKGNKGSSGPT. Residues 1528–1537 are compositionally biased toward pro residues; that stretch reads PGPPGPPGPP. Positions 1541–1561 are nonhelical region (C-terminal); it reads IQPLPILSPKKTRRHTESIQA. The propeptide at 1562 to 1804 is C-terminal propeptide; it reads DAGDNILDYS…FEVGPACFLG (243 aa). Positions 1575–1803 constitute a Fibrillar collagen NC1 domain; sequence EEIFGSLNSL…GFEVGPACFL (229 aa). Cysteine 1605 and cysteine 1637 form a disulfide bridge. Ca(2+)-binding residues include aspartate 1623, asparagine 1625, glutamine 1626, cysteine 1628, and aspartate 1631. N-linked (GlcNAc...) asparagine glycans are attached at residues asparagine 1638 and asparagine 1707. Cystine bridges form between cysteine 1646/cysteine 1801 and cysteine 1712/cysteine 1755.

Belongs to the fibrillar collagen family. As to quaternary structure, trimers composed of three different chains: alpha 1(XI), alpha 2(XI), and alpha 3(XI). Alpha 3(XI) is probably a post-translational modification of alpha 1(II). In terms of processing, prolines at the third position of the tripeptide repeating unit (G-X-Y) are hydroxylated in some or all of the chains. N-glycosylated.

The protein localises to the secreted. It localises to the extracellular space. It is found in the extracellular matrix. In terms of biological role, may play an important role in fibrillogenesis by controlling lateral growth of collagen II fibrils. This chain is Collagen alpha-1(XI) chain (Col11a1), found in Rattus norvegicus (Rat).